We begin with the raw amino-acid sequence, 220 residues long: Large ribosomal subunit protein bL9 (220 aa).

Positions 167 to 184 (AAAEVEQAEDVAAAEQQD) are enriched in low complexity. The disordered stretch occupies residues 167 to 220 (AAAEVEQAEDVAAAEQQDSSPVDDHADDADGATGGEGRDEGAGDASDGEEMPST).

Belongs to the bacterial ribosomal protein bL9 family.

Binds to the 23S rRNA. The protein is Large ribosomal subunit protein bL9 of Anaplasma marginale (strain St. Maries).